Reading from the N-terminus, the 464-residue chain is Glycosyl hydrolase family 109 protein 1 (464 aa).

The N-terminal stretch at 1 to 16 (MFKHLNALFIGLALFA) is a signal peptide. A lipid anchor (N-palmitoyl cysteine) is attached at Cys-17. Residue Cys-17 is the site of S-diacylglycerol cysteine attachment. Residues 63 to 64 (MR), Asp-85, 134 to 137 (WKHH), 154 to 155 (EV), and Asn-183 contribute to the NAD(+) site. Substrate is bound by residues Tyr-212, Arg-228, 240–243 (YATH), and Tyr-318. Tyr-240 is an NAD(+) binding site.

This sequence belongs to the Gfo/Idh/MocA family. Glycosyl hydrolase 109 subfamily. NAD(+) is required as a cofactor.

It is found in the cell membrane. Its function is as follows. Glycosidase. Has no alpha-N-acetylgalactosaminidase activity. The polypeptide is Glycosyl hydrolase family 109 protein 1 (Bacteroides fragilis (strain ATCC 25285 / DSM 2151 / CCUG 4856 / JCM 11019 / LMG 10263 / NCTC 9343 / Onslow / VPI 2553 / EN-2)).